The sequence spans 354 residues: Guanine nucleotide-binding protein G(i) subunit alpha (354 aa).

The N-myristoyl glycine moiety is linked to residue glycine 2. Residue cysteine 3 is the site of S-palmitoyl cysteine attachment. One can recognise a G-alpha domain in the interval 32-354 (REVKLLLLGA…KNNLKDCGLF (323 aa)). A G1 motif region spans residues 35-48 (KLLLLGAGESGKST). GTP-binding positions include 40 to 47 (GAGESGKS), 175 to 181 (LRTRVKT), 200 to 204 (DVGGQ), 269 to 272 (NKKD), and alanine 326. Mg(2+)-binding residues include serine 47 and threonine 181. The G2 motif stretch occupies residues 173 to 181 (DVLRTRVKT). The interval 196–205 (FKMFDVGGQR) is G3 motif. The interval 265 to 272 (ILFLNKKD) is G4 motif. The interval 324–329 (TCATDT) is G5 motif.

It belongs to the G-alpha family. G(i/o/t/z) subfamily. G proteins are composed of 3 units; alpha, beta and gamma. The alpha chain contains the guanine nucleotide binding site.

Its function is as follows. Guanine nucleotide-binding proteins (G proteins) are involved as modulators or transducers in various transmembrane signaling systems. The G(i) proteins are involved in hormonal regulation of adenylate cyclase: they inhibit the cyclase in response to beta-adrenergic stimuli. In Lymnaea stagnalis (Great pond snail), this protein is Guanine nucleotide-binding protein G(i) subunit alpha.